The primary structure comprises 205 residues: Beta-crystallin B2 (205 aa).

Alanine 2 is subject to N-acetylalanine. Positions 2–16 (ASDHQTQAGKPQPLN) are N-terminal arm. 2 Beta/gamma crystallin 'Greek key' domains span residues 17 to 56 (PKII…LVQA) and 57 to 101 (GPWV…RPIK). The segment at 102–106 (VDSQE) is connecting peptide. Beta/gamma crystallin 'Greek key' domains lie at 107 to 148 (HKII…RVQS) and 149 to 191 (GTWV…RRIR). The C-terminal arm stretch occupies residues 193 to 205 (MQWHQRGAFHPSS).

Belongs to the beta/gamma-crystallin family. In terms of assembly, homo/heterodimer, or complexes of higher-order. The structure of beta-crystallin oligomers seems to be stabilized through interactions between the N-terminal arms.

In terms of biological role, crystallins are the dominant structural components of the vertebrate eye lens. This Mesocricetus auratus (Golden hamster) protein is Beta-crystallin B2 (CRYBB2).